A 2684-amino-acid chain; its full sequence is Probable polyketide synthase 27 (2684 aa).

Residues 11–442 (CGDVAIIGIG…GSNVCLILSE (432 aa)) form the Ketosynthase family 3 (KS3) domain. Active-site for beta-ketoacyl synthase activity residues include cysteine 183, histidine 322, and histidine 365. Positions 650–683 (GVSADIIVGHSLGEMSSSYSSGMIDFETLCYLIY) are acyl/malonyl transferases. The active-site For acyl/malonyl transferase activity is the serine 660. An N-terminal hotdog fold region spans residues 958 to 1087 (HEKITSEGPP…GNFSLFKHNS (130 aa)). Residues 958-1276 (HEKITSEGPP…CTSVSLVNPR (319 aa)) enclose the PKS/mFAS DH domain. The active-site Proton acceptor; for dehydratase activity is histidine 999. The segment at 1104–1276 (NFTTISKQEF…CTSVSLVNPR (173 aa)) is C-terminal hotdog fold. Aspartate 1173 functions as the Proton donor; for dehydratase activity in the catalytic mechanism. The tract at residues 1202–1221 (IPSSSSSSKDDNDCDSNNNN) is disordered. Positions 2585–2662 (SDNEFIHSTI…QSIDIIKFGY (78 aa)) constitute a Carrier domain. The residue at position 2622 (serine 2622) is an O-(pantetheine 4'-phosphoryl)serine.

The cofactor is pantetheine 4'-phosphate.

In terms of biological role, probable polyketide synthase. This chain is Probable polyketide synthase 27 (pks27), found in Dictyostelium discoideum (Social amoeba).